Consider the following 227-residue polypeptide: 7-cyano-7-deazaguanine synthase (227 aa).

Position 7 to 17 (Leu-7 to Thr-17) interacts with ATP. Residues Cys-187, Cys-195, Cys-198, and Cys-201 each coordinate Zn(2+).

The protein belongs to the QueC family. Zn(2+) is required as a cofactor.

The catalysed reaction is 7-carboxy-7-deazaguanine + NH4(+) + ATP = 7-cyano-7-deazaguanine + ADP + phosphate + H2O + H(+). Its pathway is purine metabolism; 7-cyano-7-deazaguanine biosynthesis. Catalyzes the ATP-dependent conversion of 7-carboxy-7-deazaguanine (CDG) to 7-cyano-7-deazaguanine (preQ(0)). The chain is 7-cyano-7-deazaguanine synthase from Chlorobium phaeovibrioides (strain DSM 265 / 1930) (Prosthecochloris vibrioformis (strain DSM 265)).